A 223-amino-acid chain; its full sequence is Probable transaldolase (223 aa).

Lys-91 functions as the Schiff-base intermediate with substrate in the catalytic mechanism.

It belongs to the transaldolase family. Type 3B subfamily.

The protein localises to the cytoplasm. It carries out the reaction D-sedoheptulose 7-phosphate + D-glyceraldehyde 3-phosphate = D-erythrose 4-phosphate + beta-D-fructose 6-phosphate. It functions in the pathway carbohydrate degradation; pentose phosphate pathway; D-glyceraldehyde 3-phosphate and beta-D-fructose 6-phosphate from D-ribose 5-phosphate and D-xylulose 5-phosphate (non-oxidative stage): step 2/3. Its function is as follows. Transaldolase is important for the balance of metabolites in the pentose-phosphate pathway. The sequence is that of Probable transaldolase from Chlorobium phaeobacteroides (strain BS1).